A 238-amino-acid chain; its full sequence is Ribonuclease PH (238 aa).

Phosphate-binding positions include R86 and 124–126 (GTR).

The protein belongs to the RNase PH family. Homohexameric ring arranged as a trimer of dimers.

The enzyme catalyses tRNA(n+1) + phosphate = tRNA(n) + a ribonucleoside 5'-diphosphate. Functionally, phosphorolytic 3'-5' exoribonuclease that plays an important role in tRNA 3'-end maturation. Removes nucleotide residues following the 3'-CCA terminus of tRNAs; can also add nucleotides to the ends of RNA molecules by using nucleoside diphosphates as substrates, but this may not be physiologically important. Probably plays a role in initiation of 16S rRNA degradation (leading to ribosome degradation) during starvation. The sequence is that of Ribonuclease PH from Brucella anthropi (strain ATCC 49188 / DSM 6882 / CCUG 24695 / JCM 21032 / LMG 3331 / NBRC 15819 / NCTC 12168 / Alc 37) (Ochrobactrum anthropi).